A 460-amino-acid chain; its full sequence is MALNVVILAAGKGTRMRSDLPKVLHPIAHKSMVQHVIDTAHKVGSDAIQLVYGYGADKLQASLGEQQLNWVLQAEQLGTGHAVAQASPHIADNDTVLILYGDVPLIQQSTLEALLAARPENGVAILTVNLANPMGYGRIVRTPCEGQEQGKVVGIIEQKDATAEQLLINEINTGIMAVPGKQLKAWLSRLSNNNAQGEYYLTDIIAMAHDDGVAIDTAQPQSAIEVEGANNRVQLAQLERAYQAREAEKLMLAGANLRDPSRIDIRGEVTVGMDVMIDINVIFEGKVTLGNNVTIGAGAILIDCEIADNAEIKPYSIIEGAKLGVAASAGPFARLRPGAELKQDAHIGNFVEVKKAVIGVGSKAGHLAYLGDAVIGDGVNIGAGTITCNYDGANKHLTVIEDNVFVGSDTQLVAPVTIGKGATLGAGSTITRDVGENELVITRVKQKHLTGWQRPVKIKK.

The interval 1-232 (MALNVVILAA…AIEVEGANNR (232 aa)) is pyrophosphorylase. UDP-N-acetyl-alpha-D-glucosamine-binding positions include 8–11 (LAAG), Lys22, Gln73, 78–79 (GT), 100–102 (YGD), Gly137, Glu157, Asn172, and Asn230. Asp102 provides a ligand contact to Mg(2+). A Mg(2+)-binding site is contributed by Asn230. The linker stretch occupies residues 233–253 (VQLAQLERAYQAREAEKLMLA). Residues 254–460 (GANLRDPSRI…GWQRPVKIKK (207 aa)) are N-acetyltransferase. Positions 336 and 354 each coordinate UDP-N-acetyl-alpha-D-glucosamine. His366 acts as the Proton acceptor in catalysis. UDP-N-acetyl-alpha-D-glucosamine contacts are provided by Tyr369 and Asn380. Acetyl-CoA contacts are provided by residues Ala383, 389-390 (NY), Ser408, Ala426, and Arg443.

This sequence in the N-terminal section; belongs to the N-acetylglucosamine-1-phosphate uridyltransferase family. It in the C-terminal section; belongs to the transferase hexapeptide repeat family. Homotrimer. Mg(2+) is required as a cofactor.

It is found in the cytoplasm. It carries out the reaction alpha-D-glucosamine 1-phosphate + acetyl-CoA = N-acetyl-alpha-D-glucosamine 1-phosphate + CoA + H(+). The catalysed reaction is N-acetyl-alpha-D-glucosamine 1-phosphate + UTP + H(+) = UDP-N-acetyl-alpha-D-glucosamine + diphosphate. Its pathway is nucleotide-sugar biosynthesis; UDP-N-acetyl-alpha-D-glucosamine biosynthesis; N-acetyl-alpha-D-glucosamine 1-phosphate from alpha-D-glucosamine 6-phosphate (route II): step 2/2. The protein operates within nucleotide-sugar biosynthesis; UDP-N-acetyl-alpha-D-glucosamine biosynthesis; UDP-N-acetyl-alpha-D-glucosamine from N-acetyl-alpha-D-glucosamine 1-phosphate: step 1/1. It functions in the pathway bacterial outer membrane biogenesis; LPS lipid A biosynthesis. Functionally, catalyzes the last two sequential reactions in the de novo biosynthetic pathway for UDP-N-acetylglucosamine (UDP-GlcNAc). The C-terminal domain catalyzes the transfer of acetyl group from acetyl coenzyme A to glucosamine-1-phosphate (GlcN-1-P) to produce N-acetylglucosamine-1-phosphate (GlcNAc-1-P), which is converted into UDP-GlcNAc by the transfer of uridine 5-monophosphate (from uridine 5-triphosphate), a reaction catalyzed by the N-terminal domain. This is Bifunctional protein GlmU from Shewanella baltica (strain OS223).